Here is a 457-residue protein sequence, read N- to C-terminus: RuvB-like helicase 1 (457 aa).

72-79 (GAPGTGKT) contacts ATP.

It belongs to the RuvB family. As to quaternary structure, may form heterododecamers with RVB2. Component of the SWR1 chromatin remodeling complex, the INO80 chromatin remodeling complex, and of the R2TP complex.

Its subcellular location is the nucleus. It catalyses the reaction ATP + H2O = ADP + phosphate + H(+). In terms of biological role, DNA helicase which participates in several chromatin remodeling complexes, including the SWR1 and the INO80 complexes. The SWR1 complex mediates the ATP-dependent exchange of histone H2A for the H2A variant HZT1 leading to transcriptional regulation of selected genes by chromatin remodeling. The INO80 complex remodels chromatin by shifting nucleosomes and is involved in DNA repair. Also involved in pre-rRNA processing. The chain is RuvB-like helicase 1 (RBV1) from Debaryomyces hansenii (strain ATCC 36239 / CBS 767 / BCRC 21394 / JCM 1990 / NBRC 0083 / IGC 2968) (Yeast).